Consider the following 329-residue polypeptide: Homeobox protein ceh-40 (329 aa).

Positions 3 to 186 constitute a PBC domain; that stretch reads EASKSIMDLL…VIQLKKRYLD (184 aa). Residues 10-90 are PBC-A; sequence DLLSEVVKIT…EGVAGPDDSL (81 aa). A PBC-B region spans residues 93 to 186; sequence IQEAAGTDQY…VIQLKKRYLD (94 aa). A DNA-binding region (homeobox; TALE-type) is located at residues 187–249; it reads ARRKRRNFSK…NKRIRYKKTM (63 aa). Residues 248–275 are disordered; sequence TMAKNEDERRENRKPEDRPPPGAPGAPY. A compositionally biased stretch (basic and acidic residues) spans 250 to 266; sequence AKNEDERRENRKPEDRP.

It belongs to the TALE/PBX homeobox family. Expressed in head dopaminergic neurons.

Its subcellular location is the nucleus. Plays a role in regulating gene expression in dopaminergic neurons, acting redundantly with homeobox protein ceh-20 in head neurons. May activate dopamine pathway genes in concert with ETS domain-containing protein ast-1, and homeobox proteins ceh-43 and ceh-20. In Caenorhabditis elegans, this protein is Homeobox protein ceh-40 (ceh-40).